Here is a 409-residue protein sequence, read N- to C-terminus: Ligand-gated cation channel ZACN (409 aa).

An N-terminal signal peptide occupies residues 1–18; sequence MAPRLLLLLLAFLRLGTT. Over 19 to 233 the chain is Extracellular; it reads GPLVQGRGFR…LRLQNTALKA (215 aa). N-linked (GlcNAc...) asparagine glycans are attached at residues Asn55 and Asn99. Cys157 and Cys171 form a disulfide bridge. The helical transmembrane segment at 234–254 threads the bilayer; sequence IIALLVPGEALLLADMCGGLL. The Cytoplasmic segment spans residues 255–265; that stretch reads PLRATERIAYK. The helical transmembrane segment at 266 to 286 threads the bilayer; the sequence is VTLLLGYLVFHSSLVQALPSS. Residues 287–296 are Extracellular-facing; that stretch reads SSCNPLLIYY. A helical membrane pass occupies residues 297-317; that stretch reads FTVLLLLLFISTMETVLLAAL. The Cytoplasmic portion of the chain corresponds to 318 to 365; it reads QARGHLSARSSPIPTPRGEQQDHGDLGPHPEEAPGVKESRSWAEAADH. The segment at 325 to 354 is disordered; that stretch reads ARSSPIPTPRGEQQDHGDLGPHPEEAPGVK. Basic and acidic residues predominate over residues 336-354; it reads EQQDHGDLGPHPEEAPGVK. Residues 366 to 386 form a helical membrane-spanning segment; the sequence is IFFLVYVVGVVCSQFFFIGFW. Residues 387-409 lie on the Extracellular side of the membrane; that stretch reads MWATCKSDPAPGEAIPHGGQPRL.

It belongs to the ligand-gated ion channel (TC 1.A.9) family. In terms of processing, glycosylated.

It is found in the cell membrane. The enzyme catalyses Na(+)(in) = Na(+)(out). It carries out the reaction K(+)(in) = K(+)(out). In terms of biological role, ligand-gated cation channel that allows the movement of sodium and potassium monoatomic cations across cell membranes when activated by zinc (Zn2+), copper (Cu2+), and changes in pH. Could also transport cesium. The chain is Ligand-gated cation channel ZACN from Canis lupus familiaris (Dog).